We begin with the raw amino-acid sequence, 559 residues long: Polypeptide N-acetylgalactosaminyltransferase 1 (559 aa).

Over 1 to 8 the chain is Cytoplasmic; the sequence is MRKFAYCK. Residues 9-28 form a helical; Signal-anchor for type II membrane protein membrane-spanning segment; the sequence is VVLATSLVWVLLDMFLLLYF. Over 29-559 the chain is Lumenal; it reads SECNKCEEKK…LRNVTLPEIF (531 aa). Residue Asn-95 is glycosylated (N-linked (GlcNAc...) asparagine). 5 disulfides stabilise this stretch: Cys-106-Cys-339, Cys-330-Cys-408, Cys-442-Cys-459, Cys-482-Cys-497, and Cys-523-Cys-540. Positions 115-225 are catalytic subdomain A; the sequence is LPTTSVVIVF…VGWLEPLLAR (111 aa). 2 residues coordinate substrate: Asp-156 and Arg-186. Positions 209 and 211 each coordinate Mn(2+). A catalytic subdomain B region spans residues 285–347; the sequence is PVRTPTMAGG…TCSHVGHVFR (63 aa). Trp-316 serves as a coordination point for substrate. Residue His-344 coordinates Mn(2+). Residues Arg-347 and Tyr-352 each contribute to the substrate site. The region spanning 429 to 551 is the Ricin B-type lectin domain; the sequence is FSLGEIRNVE…GSRSQQWLLR (123 aa). The N-linked (GlcNAc...) asparagine glycan is linked to Asn-552.

It belongs to the glycosyltransferase 2 family. GalNAc-T subfamily. Mn(2+) serves as cofactor. As to expression, heart, brain, spleen, liver, skeletal muscle and kidney.

The protein localises to the golgi apparatus. It is found in the golgi stack membrane. Its subcellular location is the secreted. It catalyses the reaction L-seryl-[protein] + UDP-N-acetyl-alpha-D-galactosamine = a 3-O-[N-acetyl-alpha-D-galactosaminyl]-L-seryl-[protein] + UDP + H(+). The enzyme catalyses L-threonyl-[protein] + UDP-N-acetyl-alpha-D-galactosamine = a 3-O-[N-acetyl-alpha-D-galactosaminyl]-L-threonyl-[protein] + UDP + H(+). Its pathway is protein modification; protein glycosylation. Functionally, catalyzes the initial reaction in O-linked oligosaccharide biosynthesis, the transfer of an N-acetyl-D-galactosamine residue to a serine or threonine residue on the protein receptor. Has a broad spectrum of substrates such as apomucin-, MUC5AC-, MUC1- and MUC2-derived peptides. The chain is Polypeptide N-acetylgalactosaminyltransferase 1 from Rattus norvegicus (Rat).